Consider the following 367-residue polypeptide: Ribosomal RNA large subunit methyltransferase M (367 aa).

S-adenosyl-L-methionine contacts are provided by residues Ser189, 222–225, Asp241, Asp261, and Asp278; that span reads CPGG. Lys307 functions as the Proton acceptor in the catalytic mechanism.

Belongs to the class I-like SAM-binding methyltransferase superfamily. RNA methyltransferase RlmE family. RlmM subfamily. As to quaternary structure, monomer.

Its subcellular location is the cytoplasm. The catalysed reaction is cytidine(2498) in 23S rRNA + S-adenosyl-L-methionine = 2'-O-methylcytidine(2498) in 23S rRNA + S-adenosyl-L-homocysteine + H(+). Catalyzes the 2'-O-methylation at nucleotide C2498 in 23S rRNA. The chain is Ribosomal RNA large subunit methyltransferase M from Shewanella denitrificans (strain OS217 / ATCC BAA-1090 / DSM 15013).